Reading from the N-terminus, the 295-residue chain is 4-diphosphocytidyl-2-C-methyl-D-erythritol kinase (295 aa).

K18 is a catalytic residue. P101 to S111 is a binding site for ATP. D143 is an active-site residue.

Belongs to the GHMP kinase family. IspE subfamily.

The enzyme catalyses 4-CDP-2-C-methyl-D-erythritol + ATP = 4-CDP-2-C-methyl-D-erythritol 2-phosphate + ADP + H(+). The protein operates within isoprenoid biosynthesis; isopentenyl diphosphate biosynthesis via DXP pathway; isopentenyl diphosphate from 1-deoxy-D-xylulose 5-phosphate: step 3/6. Functionally, catalyzes the phosphorylation of the position 2 hydroxy group of 4-diphosphocytidyl-2C-methyl-D-erythritol. This Vibrio vulnificus (strain YJ016) protein is 4-diphosphocytidyl-2-C-methyl-D-erythritol kinase.